The following is a 525-amino-acid chain: DEAD-box ATP-dependent RNA helicase CshA (525 aa).

Positions 2-30 match the Q motif motif; it reads TTFRELGLSDSLLQSVESMGFEEATPIQA. The Helicase ATP-binding domain maps to 33 to 203; the sequence is IPHALQGKDI…ERFMTEPQHI (171 aa). Position 46 to 53 (46 to 53) interacts with ATP; the sequence is AQTGTGKT. Positions 151 to 154 match the DEAD box motif; it reads DEAD. One can recognise a Helicase C-terminal domain in the interval 214–374; sequence NIQQFYLEVQ…RMDAPTLDEA (161 aa). Residues 428-525 form a disordered region; that stretch reads TTPIALTSEP…RKHHSRKPQA (98 aa). The span at 458 to 503 shows a compositional bias: basic and acidic residues; the sequence is DGNRNRSRDGRGGDGRNRDRNRDGRNRDGNRDRNRDGGNRGRRGEG. Basic residues predominate over residues 515-525; that stretch reads ERKHHSRKPQA.

Belongs to the DEAD box helicase family. CshA subfamily. In terms of assembly, oligomerizes, may be a member of the RNA degradosome.

The protein localises to the cytoplasm. The catalysed reaction is ATP + H2O = ADP + phosphate + H(+). Functionally, DEAD-box RNA helicase possibly involved in RNA degradation. Unwinds dsRNA in both 5'- and 3'-directions, has RNA-dependent ATPase activity. This is DEAD-box ATP-dependent RNA helicase CshA from Bacillus cereus (strain ATCC 10987 / NRS 248).